The primary structure comprises 175 residues: Urease accessory protein UreE (175 aa).

Residues phenylalanine 134–arginine 175 form a disordered region.

It belongs to the UreE family.

The protein localises to the cytoplasm. Involved in urease metallocenter assembly. Binds nickel. Probably functions as a nickel donor during metallocenter assembly. This Dechloromonas aromatica (strain RCB) protein is Urease accessory protein UreE.